A 343-amino-acid polypeptide reads, in one-letter code: Anthranilate phosphoribosyltransferase (343 aa).

5-phospho-alpha-D-ribose 1-diphosphate contacts are provided by residues G84, G87–D88, T92, N94–T97, K112–S120, and S124. G84 contacts anthranilate. S96 contacts Mg(2+). N115 contributes to the anthranilate binding site. R170 is an anthranilate binding site. Mg(2+) is bound by residues D229 and E230.

It belongs to the anthranilate phosphoribosyltransferase family. As to quaternary structure, homodimer. Mg(2+) is required as a cofactor.

The enzyme catalyses N-(5-phospho-beta-D-ribosyl)anthranilate + diphosphate = 5-phospho-alpha-D-ribose 1-diphosphate + anthranilate. The protein operates within amino-acid biosynthesis; L-tryptophan biosynthesis; L-tryptophan from chorismate: step 2/5. In terms of biological role, catalyzes the transfer of the phosphoribosyl group of 5-phosphorylribose-1-pyrophosphate (PRPP) to anthranilate to yield N-(5'-phosphoribosyl)-anthranilate (PRA). The polypeptide is Anthranilate phosphoribosyltransferase (Bordetella pertussis (strain Tohama I / ATCC BAA-589 / NCTC 13251)).